The chain runs to 362 residues: MNTFGTRLKFTSFGESHGVAVGCIIDGMPAGVKFDEEFLQNELDKRKGGSKFATPRKESDKAQVLSGVFEGYTTGHPIAIVVFNENAHSKDYDNLKDLFRPAHADFTYFYKYGIRDHRGGGRSSARESVARVAGGAVAAMLLREFDICVQSGVFGVGTFVSNLKEEEFDFEFAKKSEIFCLDPKLESDFKNEILNARNSKDSVGAAVFTKVSGMLVGLGEVLYDKLDSKLAHALMGVNAVKAVEIGEGINASKMRGSCNNDALKDGKFLSNHSGGILGGISNGENLILKTYFKPTPSIFAKQESIDKFGNNLEFELKGRHDPCVGVRGSVVASAMVRLVLADCLLLNTSANLNNLKNAYGLK.

Position 46 (Arg46) interacts with NADP(+). FMN is bound by residues 122–124, 238–239, Gly278, 293–297, and Arg319; these read RSS, NA, and KPTPS.

Belongs to the chorismate synthase family. Homotetramer. FMNH2 is required as a cofactor.

It catalyses the reaction 5-O-(1-carboxyvinyl)-3-phosphoshikimate = chorismate + phosphate. Its pathway is metabolic intermediate biosynthesis; chorismate biosynthesis; chorismate from D-erythrose 4-phosphate and phosphoenolpyruvate: step 7/7. Its function is as follows. Catalyzes the anti-1,4-elimination of the C-3 phosphate and the C-6 proR hydrogen from 5-enolpyruvylshikimate-3-phosphate (EPSP) to yield chorismate, which is the branch point compound that serves as the starting substrate for the three terminal pathways of aromatic amino acid biosynthesis. This reaction introduces a second double bond into the aromatic ring system. The sequence is that of Chorismate synthase from Campylobacter jejuni (strain RM1221).